Consider the following 469-residue polypeptide: Septin homolog spn1 (469 aa).

The disordered stretch occupies residues 1 to 58; sequence MASMVLADGMPTVKDDSTRSRGSDVDSFTSTDNVTQINVEAAISENKNEEKPIQDNSE. Residues 13–24 are compositionally biased toward basic and acidic residues; the sequence is VKDDSTRSRGSD. Residues 26 to 38 show a composition bias toward polar residues; it reads DSFTSTDNVTQIN. The 276-residue stretch at 92-367 folds into the Septin-type G domain; sequence QGFNFNVLVL…EAYRTERLLS (276 aa). The interval 102–109 is G1 motif; that stretch reads GESGSGKS. GTP is bound by residues 102-109, Thr139, Gly165, 244-252, and Arg317; these read GESGSGKS and KADTLTDDE. The tract at residues 162-165 is G3 motif; the sequence is DTPG. The G4 motif stretch occupies residues 243–246; it reads AKAD. The stretch at 383 to 469 forms a coiled coil; the sequence is SAKLEEERAL…NEKSKRKFFK (87 aa).

This sequence belongs to the TRAFAC class TrmE-Era-EngA-EngB-Septin-like GTPase superfamily. Septin GTPase family. In terms of assembly, component of the septin complex composed of two copies of each spn1, spn2, spn3 and spn4.

The protein localises to the cytoplasm. It is found in the cell cortex. Its function is as follows. Plays a role in the cell cycle. Involved in a late stage of septum formation leading to the separation of the daughter cells. This chain is Septin homolog spn1 (spn1), found in Schizosaccharomyces pombe (strain 972 / ATCC 24843) (Fission yeast).